The primary structure comprises 1043 residues: Non-canonical nonribosomal peptide synthetase cpsA (1043 aa).

The tract at residues Arg41–Tyr386 is adenylation (A) domain. The 78-residue stretch at Gln549 to Gly626 folds into the Carrier domain. At Ser586 the chain carries O-(pantetheine 4'-phosphoryl)serine. Residues Met671–Ala914 form a short-chain dehydrogenase/reductase (R) domain region. In terms of domain architecture, Thioester reductase (TE) spans Thr672 to Ile915.

This sequence belongs to the NRP synthetase family. Requires pantetheine 4'-phosphate as cofactor.

It carries out the reaction L-valine + ATP + NADPH + H(+) = L-valinal + AMP + diphosphate + NADP(+). The enzyme catalyses L-tryptophan + ATP + NADPH + H(+) = L-tryptophanal + AMP + diphosphate + NADP(+). Its pathway is alkaloid biosynthesis. In terms of biological role, non-canonical nonribosomal peptide synthetase; part of the gene cluster that mediates the biosynthesis of campesine G, a dimeric indole piperazine alkaloid that shows good insecticidal activity Galleria mellonella. CpsA catalyzes the first steps of the pathway by producing L-tryptophanal and L-valinal from their respective amino-acids. These products condensate spontaneously to form trypyl-valyl pyrazine also known as didehydrocampesine A. The NmrA-like family domain-containing oxidoreductase cpsB is the next enzyme in cps pathway and reduces the unstable didehydrocampesine A to campesine A. The methyltransferase cpsF and the acetyltransferase cpsE both recognize N13 of piperazine ring to carry out methylation and acetylation of campesine A to produce campesine C and B, respectively. The cytochrome P450 monooxygenase cpsD then acts as a dimerase that catalyzes oxidative heterocoupling between campesine B and C to produce heterodimers with unexpected 6/5/6/6/6/6/5/6 eight-ring scaffold called campesine D. Finally,the cytochrome P450 monooxygenase cpsC is a regioselective dehydrogenase that catalyzes dehydrogenation reaction towards C2-N1 to produce campesine G. The protein is Non-canonical nonribosomal peptide synthetase cpsA of Aspergillus campestris (strain IBT 28561).